The sequence spans 1512 residues: Sterol 3-beta-glucosyltransferase (1512 aa).

Disordered stretches follow at residues 22–50 and 150–222; these read FSGS…YHSL and DEHT…DTDV. Over residues 156 to 169 the composition is skewed to acidic residues; it reads SEEEDSADKEEESI. Low complexity predominate over residues 190 to 222; sequence TTATLITTQITRTKTATTATPTPTPTSSVDTDV. The GRAM 1 domain occupies 296-331; it reads LQRVFDLSDEDTFCGNYSAWLIKDVLLQGHVYLTKD. One can recognise a PH domain in the interval 359–520; that stretch reads SIVYSGNLGL…WCNNITKLIF (162 aa). The GRAM 2 domain maps to 816–880; the sequence is RNFQSHFSTN…TDIEEVRASR (65 aa). UDP-alpha-D-glucose is bound by residues S1024, R1025, D1027, N1299, I1328, H1330, H1343, S1346, G1347, T1348, D1367, and Q1368. Residues 1450–1512 are disordered; sequence YKRHHPVPSG…NNSPSQNSSN (63 aa). A compositionally biased stretch (acidic residues) spans 1467–1493; that stretch reads TDSDDYDDDEDDDESDKDDEEEEEENS. Residues 1501-1512 are compositionally biased toward polar residues; the sequence is GVNNSPSQNSSN.

The protein belongs to the glycosyltransferase 28 family.

It localises to the cytoplasm. Its subcellular location is the membrane. The catalysed reaction is a sterol + UDP-alpha-D-glucose = a sterol 3-beta-D-glucoside + UDP + H(+). It carries out the reaction ergosterol + UDP-alpha-D-glucose = ergosteryl 3-beta-D-glucoside + UDP + H(+). Sterol glycosyltransferase responsible for the glycosylation of ergosterol to form ergosterol-glucoside. The sequence is that of Sterol 3-beta-glucosyltransferase from Candida albicans (strain SC5314 / ATCC MYA-2876) (Yeast).